The chain runs to 304 residues: Non-specific ribonucleoside hydrolase RihC (304 aa).

H233 is a catalytic residue.

This sequence belongs to the IUNH family. RihC subfamily.

In terms of biological role, hydrolyzes both purine and pyrimidine ribonucleosides with a broad-substrate specificity. The sequence is that of Non-specific ribonucleoside hydrolase RihC from Shigella sonnei (strain Ss046).